The primary structure comprises 359 residues: Nicotinate-nucleotide--dimethylbenzimidazole phosphoribosyltransferase (359 aa).

Glutamate 318 serves as the catalytic Proton acceptor.

Belongs to the CobT family. In terms of assembly, homodimer.

It catalyses the reaction 5,6-dimethylbenzimidazole + nicotinate beta-D-ribonucleotide = alpha-ribazole 5'-phosphate + nicotinate + H(+). The protein operates within nucleoside biosynthesis; alpha-ribazole biosynthesis; alpha-ribazole from 5,6-dimethylbenzimidazole: step 1/2. In terms of biological role, catalyzes the synthesis of alpha-ribazole-5'-phosphate from nicotinate mononucleotide (NAMN) and 5,6-dimethylbenzimidazole (DMB). The chain is Nicotinate-nucleotide--dimethylbenzimidazole phosphoribosyltransferase from Escherichia coli (strain SMS-3-5 / SECEC).